The primary structure comprises 565 residues: METTTKKARSLYIPYAGPVLLEFPLLNKGSAFSVEERRNFNLSGLLPEVVESIEEQAERAWLQYQGFKTEIDKHIYLRNIQDTNETLFYRLVQNHLEEMMPVIYTPTVGAACERFSEIYRRARGVFISYPNRHNMDDILQNVPNHNIKVIVVTDGERILGLGDQGIGGMGIPIGKLSLYTACGGISPAYTLPVVLDVGTNNQQLLNDPLYMGWRHPRITDDEYYAFVDEFIQAVKQRWPDILLQFEDFAQKNAMPLLTRYRDEICSFNDDIQGTAAVTVGTLIAASRAAGSQLSEQKIVFLGAGSAGCGIAEQIIAQTQREGLSEDAARQKVFMVDRFGLLTDRMPNLLSFQTKLVQKCDNLQHWDTENDVLSLLDVVRNVKPDILIGVSGQTGLFTEEIIREMHKHCPRPIVMPLSNPTSRVEATPQDIIAWTEGNALVATGSPFSPVIWKDKVYPIAQCNNAYIFPGIGLGVIASGASRITDEMLMSASETLAKHSPLVNNGEGLVLPALKDIQVVSRAIAFAVGKMAQQQGVAVKTSAEALQQAIDDNFWKPEYRDYRRTSI.

Tyr-104 serves as the catalytic Proton donor. Residue Arg-157 participates in NAD(+) binding. Lys-175 serves as the catalytic Proton acceptor. Residues Glu-246, Asp-247, and Asp-270 each contribute to the a divalent metal cation site. NAD(+) is bound by residues Asp-270 and Asn-418.

Belongs to the malic enzymes family. As to quaternary structure, homotetramer. Mg(2+) serves as cofactor. Mn(2+) is required as a cofactor.

It catalyses the reaction (S)-malate + NAD(+) = pyruvate + CO2 + NADH. The enzyme catalyses oxaloacetate + H(+) = pyruvate + CO2. This Salmonella arizonae (strain ATCC BAA-731 / CDC346-86 / RSK2980) protein is NAD-dependent malic enzyme.